The primary structure comprises 234 residues: Leucyl/phenylalanyl-tRNA--protein transferase (234 aa).

Belongs to the L/F-transferase family.

The protein resides in the cytoplasm. The enzyme catalyses N-terminal L-lysyl-[protein] + L-leucyl-tRNA(Leu) = N-terminal L-leucyl-L-lysyl-[protein] + tRNA(Leu) + H(+). It catalyses the reaction N-terminal L-arginyl-[protein] + L-leucyl-tRNA(Leu) = N-terminal L-leucyl-L-arginyl-[protein] + tRNA(Leu) + H(+). It carries out the reaction L-phenylalanyl-tRNA(Phe) + an N-terminal L-alpha-aminoacyl-[protein] = an N-terminal L-phenylalanyl-L-alpha-aminoacyl-[protein] + tRNA(Phe). Its function is as follows. Functions in the N-end rule pathway of protein degradation where it conjugates Leu, Phe and, less efficiently, Met from aminoacyl-tRNAs to the N-termini of proteins containing an N-terminal arginine or lysine. The chain is Leucyl/phenylalanyl-tRNA--protein transferase from Shigella boydii serotype 18 (strain CDC 3083-94 / BS512).